The following is a 170-amino-acid chain: Cathelicidin antimicrobial peptide (170 aa).

An N-terminal signal peptide occupies residues 1-30; it reads MKTQRDGPSLGRWSLVLLLLGLTMPLAITA. A propeptide spans 31-131 (cathelin-like domain (CLD)); that stretch reads QVLSYQEAVL…DISCDKDERK (101 aa). 2 disulfide bridges follow: Cys86–Cys97 and Cys108–Cys125. The segment at 150 to 162 is active core; it reads FKKIGQKINDFLG.

The protein belongs to the cathelicidin family. Monomer, homodimer or homotrimer (in vitro). Oligomerizes as tetra- or hexamer in solution (in vitro). In terms of processing, proteolytically cleaved by proteinase PRTN3 into antibacterial peptide LL-37. Proteolytically cleaved by cathepsin CTSG and neutrophil elastase ELANE. Resistant to proteolytic degradation in solution, and when bound to both zwitterionic (mimicking mammalian membranes) and negatively charged membranes (mimicking bacterial membranes). Post-translationally, after secretion onto the skin surface, the CAMP gene product is processed by a serine protease-dependent mechanism into multiple novel antimicrobial peptides distinct from and shorter than cathelicidin LL-37. These peptides show enhanced antimicrobial action, acquiring the ability to kill skin pathogens such as S.aureus, E.coli and C.albicans. These peptides have lost the ability to stimulate CXCL8/IL8 release from keratinocytes. The peptides act synergistically, killing bacteria at lower concentrations when present together, and maintain activity at increased salt condition.

The protein resides in the secreted. Its subcellular location is the vesicle. Antimicrobial protein that is an integral component of the innate immune system. Binds to bacterial lipopolysaccharides (LPS). Acts via neutrophil N-formyl peptide receptors to enhance the release of CXCL2. Postsecretory processing generates multiple cathelicidin antimicrobial peptides with various lengths which act as a topical antimicrobial defense in sweat on skin. The unprocessed precursor form, cathelicidin antimicrobial peptide, inhibits the growth of Gram-negative E.coli and E.aerogenes with efficiencies comparable to that of the mature peptide LL-37 (in vitro). Its function is as follows. Antimicrobial peptide that is an integral component of the innate immune system. Binds to bacterial lipopolysaccharides (LPS). Causes membrane permeabilization by forming transmembrane pores (in vitro). Causes lysis of E.coli. Exhibits antimicrobial activity against Gram-negative bacteria such as P.aeruginosa, S.typhimurium, E.aerogenes, E.coli and P.syringae, Gram-positive bacteria such as L.monocytogenes, S.epidermidis, S.pyogenes and S.aureus, as well as vancomycin-resistant enterococci (in vitro). Exhibits antimicrobial activity against methicillin-resistant S.aureus, P.mirabilis, and C.albicans in low-salt media, but not in media containing 100 mM NaCl (in vitro). Forms chiral supramolecular assemblies with quinolone signal (PQS) molecules of P.aeruginosa, which may lead to interference of bacterial quorum signaling and perturbance of bacterial biofilm formation. May form supramolecular fiber-like assemblies on bacterial membranes. Induces cytokine and chemokine producation as well as TNF/TNFA and CSF2/GMCSF production in normal human keratinocytes. Exhibits hemolytic activity against red blood cells. In terms of biological role, exhibits antimicrobial activity against E.coli and B.megaterium (in vitro). This Cebus capucinus (White-faced sapajou) protein is Cathelicidin antimicrobial peptide.